A 586-amino-acid polypeptide reads, in one-letter code: A-type ATP synthase subunit A (586 aa).

ATP is bound at residue glycine 232–threonine 239.

It belongs to the ATPase alpha/beta chains family. In terms of assembly, has multiple subunits with at least A(3), B(3), C, D, E, F, H, I and proteolipid K(x).

The protein resides in the cell membrane. It carries out the reaction ATP + H2O + 4 H(+)(in) = ADP + phosphate + 5 H(+)(out). In terms of biological role, component of the A-type ATP synthase that produces ATP from ADP in the presence of a proton gradient across the membrane. The A chain is the catalytic subunit. In Methanococcus maripaludis (strain C7 / ATCC BAA-1331), this protein is A-type ATP synthase subunit A.